Reading from the N-terminus, the 330-residue chain is 1-aminocyclopropane-1-carboxylate oxidase 2 (330 aa).

Residues 153–253 (PNFGTKVSNY…RMSIASFYNP (101 aa)) form the Fe2OG dioxygenase domain. Fe cation is bound by residues histidine 177, aspartate 179, and histidine 234.

This sequence belongs to the iron/ascorbate-dependent oxidoreductase family. Monomer. Fe cation serves as cofactor.

It carries out the reaction 1-aminocyclopropane-1-carboxylate + L-ascorbate + O2 = ethene + L-dehydroascorbate + hydrogen cyanide + CO2 + 2 H2O. It participates in alkene biosynthesis; ethylene biosynthesis via S-adenosyl-L-methionine; ethylene from S-adenosyl-L-methionine: step 2/2. This is 1-aminocyclopropane-1-carboxylate oxidase 2 (ACO2) from Malus domestica (Apple).